A 97-amino-acid polypeptide reads, in one-letter code: Co-chaperonin GroES (97 aa).

It belongs to the GroES chaperonin family. In terms of assembly, heptamer of 7 subunits arranged in a ring. Interacts with the chaperonin GroEL.

It localises to the cytoplasm. Its function is as follows. Together with the chaperonin GroEL, plays an essential role in assisting protein folding. The GroEL-GroES system forms a nano-cage that allows encapsulation of the non-native substrate proteins and provides a physical environment optimized to promote and accelerate protein folding. GroES binds to the apical surface of the GroEL ring, thereby capping the opening of the GroEL channel. This is Co-chaperonin GroES from Symbiobacterium thermophilum (strain DSM 24528 / JCM 14929 / IAM 14863 / T).